We begin with the raw amino-acid sequence, 416 residues long: MTGSNSPAAATDFFHDAPSLPAVPETPVRKFNINFGPQHPAAHGVLRLVLELDGEIVERVDPHIGLLHRGTEKLMEARTYLQNIPYFDRLDYVAPMNQEHAFCLAIEKLLGVDVPLRGSLIRVLFCEIGRVLNHLLNVTTQAMDVGALTPPLWGFEEREKLMVFYERACGARLHANYFRPGGVHQDLTPSLIDDIEKWAKAFPKICDDIEGLITDNRIFKQRNVDIGVVTKEDALAWGFSGVMVRGSGIAWDLRRNQPYECYNDFEFDIPLGKNGDCYDRYLCRMQEMRESTKIILQAIEKLRATPGPVMTQDNKVAPPRRAEMKRSMEALIHHFKLYTEGFRTPEGEVYACVEAPKGEFGVFLVSNGTNKPYRCKIKAPGFSHLAAMDWMNRGHQLADVSAILGSLDIVFGEVDR.

Belongs to the complex I 49 kDa subunit family. NDH-1 is composed of 14 different subunits. Subunits NuoB, C, D, E, F, and G constitute the peripheral sector of the complex.

The protein localises to the cell inner membrane. The catalysed reaction is a quinone + NADH + 5 H(+)(in) = a quinol + NAD(+) + 4 H(+)(out). NDH-1 shuttles electrons from NADH, via FMN and iron-sulfur (Fe-S) centers, to quinones in the respiratory chain. The immediate electron acceptor for the enzyme in this species is believed to be ubiquinone. Couples the redox reaction to proton translocation (for every two electrons transferred, four hydrogen ions are translocated across the cytoplasmic membrane), and thus conserves the redox energy in a proton gradient. This is NADH-quinone oxidoreductase subunit D from Caulobacter sp. (strain K31).